A 423-amino-acid polypeptide reads, in one-letter code: Ornithine cyclodeaminase (423 aa).

Residues Asn-241, Ala-242, Asp-320, Thr-352, Met-353, Leu-354, His-355, Asp-373, Asp-396, and Val-397 each contribute to the NAD(+) site.

Belongs to the AgrE/ArgZ ornithine cyclodeaminase family. Requires NAD(+) as cofactor.

The catalysed reaction is L-ornithine = L-proline + NH4(+). Catalyzes the conversion of ornithine to proline, with the release of ammonia. The polypeptide is Ornithine cyclodeaminase (Methanocaldococcus jannaschii (strain ATCC 43067 / DSM 2661 / JAL-1 / JCM 10045 / NBRC 100440) (Methanococcus jannaschii)).